The following is a 525-amino-acid chain: GMP synthase [glutamine-hydrolyzing] (525 aa).

The region spanning 9–207 is the Glutamine amidotransferase type-1 domain; sequence RILILDFGSQ…VLGICGCEAL (199 aa). The active-site Nucleophile is the Cys86. Active-site residues include His181 and Glu183. Residues 208-400 enclose the GMPS ATP-PPase domain; the sequence is WTSATIIEDA…LGLPYDMLYR (193 aa). 235 to 241 contributes to the ATP binding site; that stretch reads SGGVDSS.

As to quaternary structure, homodimer.

It catalyses the reaction XMP + L-glutamine + ATP + H2O = GMP + L-glutamate + AMP + diphosphate + 2 H(+). It participates in purine metabolism; GMP biosynthesis; GMP from XMP (L-Gln route): step 1/1. Functionally, catalyzes the synthesis of GMP from XMP. This Yersinia pseudotuberculosis serotype IB (strain PB1/+) protein is GMP synthase [glutamine-hydrolyzing].